A 257-amino-acid polypeptide reads, in one-letter code: UPF0246 protein RSc2009 (257 aa).

The protein belongs to the UPF0246 family.

The polypeptide is UPF0246 protein RSc2009 (Ralstonia nicotianae (strain ATCC BAA-1114 / GMI1000) (Ralstonia solanacearum)).